A 324-amino-acid polypeptide reads, in one-letter code: Probable cell division protein WhiA (324 aa).

Positions 276-310 (TLKELGEMMQGGKVSKSGINHRLRKIDEFADKLRN) form a DNA-binding region, H-T-H motif.

It belongs to the WhiA family.

Functionally, involved in cell division and chromosome segregation. This Shouchella clausii (strain KSM-K16) (Alkalihalobacillus clausii) protein is Probable cell division protein WhiA.